Here is a 258-residue protein sequence, read N- to C-terminus: Imidazole glycerol phosphate synthase subunit HisF (258 aa).

Catalysis depends on residues Asp-12 and Asp-131.

It belongs to the HisA/HisF family. Heterodimer of HisH and HisF.

Its subcellular location is the cytoplasm. The enzyme catalyses 5-[(5-phospho-1-deoxy-D-ribulos-1-ylimino)methylamino]-1-(5-phospho-beta-D-ribosyl)imidazole-4-carboxamide + L-glutamine = D-erythro-1-(imidazol-4-yl)glycerol 3-phosphate + 5-amino-1-(5-phospho-beta-D-ribosyl)imidazole-4-carboxamide + L-glutamate + H(+). Its pathway is amino-acid biosynthesis; L-histidine biosynthesis; L-histidine from 5-phospho-alpha-D-ribose 1-diphosphate: step 5/9. Functionally, IGPS catalyzes the conversion of PRFAR and glutamine to IGP, AICAR and glutamate. The HisF subunit catalyzes the cyclization activity that produces IGP and AICAR from PRFAR using the ammonia provided by the HisH subunit. The sequence is that of Imidazole glycerol phosphate synthase subunit HisF from Nitrosomonas europaea (strain ATCC 19718 / CIP 103999 / KCTC 2705 / NBRC 14298).